Here is a 953-residue protein sequence, read N- to C-terminus: Trafficking kinesin-binding protein 1 (953 aa).

One can recognise an HAP1 N-terminal domain in the interval 47-354; it reads LEEQLPHYKL…EELKNLRNKT (308 aa). Residues 104 to 356 are a coiled coil; sequence QMTKTYNDID…LKNLRNKTMP (253 aa). Residues 359-509 form an interaction with HGS region; it reads TSRRYHSLGL…RRLSLRRENY (151 aa). The O-linked (GlcNAc) serine glycan is linked to Ser447. Residues 472–495 form a disordered region; the sequence is AADLGNDERSKKPGTPGTPGSHDL. Residues 492–532 adopt a coiled-coil conformation; that stretch reads SHDLETALRRLSLRRENYLSERRFFEEEQERKLQELAEKGE. Ser537 carries the post-translational modification Phosphoserine. Residues 658-672 form an interaction with OGT region; the sequence is PGKCMSQTNSTFTFT. Residues Ser680 and Ser719 are each glycosylated (O-linked (GlcNAc) serine). Ser719 is modified (phosphoserine). A disordered region spans residues 777–796; that stretch reads VIPSTPPNSPMQTPTSSPPS. Positions 786 to 796 are enriched in low complexity; the sequence is PMQTPTSSPPS. Ser919 is subject to Phosphoserine. Thr935 is a glycosylation site (O-linked (GlcNAc) threonine).

It belongs to the milton family. As to quaternary structure, interacts with RHOT1 and RHOT2. Found in a complex with KIF5B, OGT, RHOT1 and RHOT2. Interacts with HGS. Interacts with GABRA1. Interacts with KIF5C. Interacts with OGT; stable interaction is not required for glycosylation of this protein by OGT. Isoform 1 interacts with OGT. O-glycosylated. Glycosylated by OGT; glycosylation in response to increased extracellular glucose levels is required for and leads to regulation of mitochondrial motility by OGT. High expression in spinal cord and moderate expression in all other tissues and specific brain regions examined. Expressed in all cell lines examined.

It localises to the cytoplasm. It is found in the nucleus. The protein localises to the mitochondrion. The protein resides in the early endosome. Its subcellular location is the endosome. It localises to the mitochondrion membrane. It is found in the cell cortex. In terms of biological role, involved in the regulation of endosome-to-lysosome trafficking, including endocytic trafficking of EGF-EGFR complexes and GABA-A receptors. Involved in mitochondrial motility. When O-glycosylated, abolishes mitochondrial motility. Crucial for recruiting OGT to the mitochondrial surface of neuronal processes. TRAK1 and RHOT form an essential protein complex that links KIF5 to mitochondria for light chain-independent, anterograde transport of mitochondria. In Homo sapiens (Human), this protein is Trafficking kinesin-binding protein 1 (TRAK1).